Reading from the N-terminus, the 704-residue chain is MPRNTALEKYRNIGICAHVDAGKTTTTERILFYTGLSHKIGEVHDGAATMDWMEQEQERGITITSAATTTFWSGMDQQFEKHRINIIDTPGHVDFTIEVERSLRVLDGAVVVFCGSSGVEPQSETVWRQANKYGVPRIVFVNKMDRSGADFERVCAQIKTRLKANVVPVQLNIGAEEDFKGVIDLIRMKAIMWNEEDMGLTYELVDIPADLQDRAEELRMEMIEAAAEASEELMEKYLEGGELSEDEIHQGLRARVLNNEIVLAFCGSAFKNKGVQAVLDGVVRYLPAPNQVPAIKCETEDGEPASRPSSDDAPFAALAFKLATDPFVGNLTFIRVYSGVLKSGDAVYNPVKGKKERVGRIVQMHANKRDEIKEVRAGDIAACIGLKDVTTGDTLCDQEDVVILEKMDFPEPVISVAVEPKSKADQEKMSIALGKLAAEDPSFRVKTDEESGQTIISGMGELHLDIIVDRMRREFKVEANVGNPQVAYRETIRSKVEQEAKFVRQSGGRGQYGHVFVRFEPLDEVDENGEAKVFKFVDEVVGGVVPKEYIGSVAKGIEEQLNNGVLAGYPMIGVKATLYDGSYHDVDSSEMAFKIAGSMALKEGAKKANACILEPIMKVEVVTPEDYLGDVMGDLNRRRGIIEGMDENPSGRVINALVPLAEMFGYATNVRSISQGRASFSMEFKKYAEVPNNIADEIIKSRNS.

Residues 8 to 290 (EKYRNIGICA…GVVRYLPAPN (283 aa)) form the tr-type G domain. GTP contacts are provided by residues 17-24 (AHVDAGKT), 88-92 (DTPGH), and 142-145 (NKMD).

This sequence belongs to the TRAFAC class translation factor GTPase superfamily. Classic translation factor GTPase family. EF-G/EF-2 subfamily.

The protein localises to the cytoplasm. In terms of biological role, catalyzes the GTP-dependent ribosomal translocation step during translation elongation. During this step, the ribosome changes from the pre-translocational (PRE) to the post-translocational (POST) state as the newly formed A-site-bound peptidyl-tRNA and P-site-bound deacylated tRNA move to the P and E sites, respectively. Catalyzes the coordinated movement of the two tRNA molecules, the mRNA and conformational changes in the ribosome. The sequence is that of Elongation factor G from Francisella tularensis subsp. holarctica (strain LVS).